A 322-amino-acid polypeptide reads, in one-letter code: MSGRLPFSQSFWEEFLMGREGHLPVLPELSHVSKGVIRILGGNPGSMHLQGTNTYLVGTGRSRILIDTAQGLPAWINRISSFLSTQKIELSYVLLTHWHGDHTGGVPDLIARNSSLANKIYKNQPDSGQSPITHGQIFSVDGATVRAILTPGHSVDHMCFLLEEENALFTGDNVLGHGFSVAQDLGRYMDSLRDMASLGCRIGYPAHGAMIENLPGKLEEYIQHREGRERMMLSALTRHRVRGEGTRDERVKYGLTLNEIVLAVYGRLPQEVIEKALAPSLLQVLWKLTEDRMVGFKPGDPLKRQWFALEQRQRNKVRGCRG.

Zn(2+)-binding residues include His97, His99, Asp101, and His102. Residue Asp101 is the Proton donor/acceptor of the active site.

Belongs to the metallo-beta-lactamase superfamily. The cofactor is Zn(2+).

Its pathway is secondary metabolite biosynthesis. Lactamase-like protein; part of the gene cluster that mediates the biosynthesis of neosartoricin B, a prenylated anthracenone that probably exhibits T-cell antiproliferative activity, suggestive of a physiological role as an immunosuppressive agent. The non-reducing polyketide synthase nscA probably synthesizes and cyclizes the decaketide backbone. The hydrolase nscB then mediates the product release through hydrolysis followed by spontaneous decarboxylation. The prenyltransferase nscD catalyzes the addition of the dimethylallyl group to the aromatic C5. The FAD-dependent monooxygenase nscC is then responsible for the stereospecific hydroxylation at C2. Neosartoricin B can be converted into two additional compounds neosartoricins C and D. Neosartoricin C is a spirocyclic compound that is cyclized through the attack of C3 hydroxyl on C14, followed by dehydration. On the other hand, neosartoricin D is a further cyclized compound in which attack of C2 on C14 in neosartoricin C results in the formation of the acetal-containing dioxabicyclo-octanone ring. Both of these compounds are novel and possibly represent related metabolites of the gene cluster. The sequence is that of Lactamase-like protein nscB from Trichophyton rubrum (strain ATCC MYA-4607 / CBS 118892) (Athlete's foot fungus).